The primary structure comprises 405 residues: Phosphoglycerate kinase (405 aa).

Residues 23-25 (DFN), Arg-39, 62-65 (HLGR), Arg-121, and Arg-154 contribute to the substrate site. ATP-binding positions include Lys-207, Gly-298, Glu-329, and 355–358 (GGDT).

The protein belongs to the phosphoglycerate kinase family. In terms of assembly, monomer.

The protein localises to the cytoplasm. It carries out the reaction (2R)-3-phosphoglycerate + ATP = (2R)-3-phospho-glyceroyl phosphate + ADP. It participates in carbohydrate degradation; glycolysis; pyruvate from D-glyceraldehyde 3-phosphate: step 2/5. The protein is Phosphoglycerate kinase of Campylobacter hominis (strain ATCC BAA-381 / DSM 21671 / CCUG 45161 / LMG 19568 / NCTC 13146 / CH001A).